A 679-amino-acid chain; its full sequence is Glycine--tRNA ligase beta subunit (679 aa).

The protein belongs to the class-II aminoacyl-tRNA synthetase family. As to quaternary structure, tetramer of two alpha and two beta subunits.

It is found in the cytoplasm. The enzyme catalyses tRNA(Gly) + glycine + ATP = glycyl-tRNA(Gly) + AMP + diphosphate. This is Glycine--tRNA ligase beta subunit from Streptococcus pyogenes serotype M1.